Here is a 637-residue protein sequence, read N- to C-terminus: Nucleoside triphosphatase I (637 aa).

A Helicase ATP-binding domain is found at 43 to 205 (FLGLNSMNSI…QMLVNLLRPG (163 aa)). An ATP-binding site is contributed by 56–63 (QETGVGKT). A DEXH box motif is present at residues 142-145 (DECH). A Helicase C-terminal domain is found at 358–537 (ELYNYLYEHS…QLYKVFKHSS (180 aa)). Residues 459–526 (DIFILDMTWN…DIIQSKSKEF (68 aa)) form a binding to the cap-specific mRNA (nucleoside-2'-O-)-methyltransferase region.

Belongs to the helicase family. NPH I subfamily. In terms of assembly, monomer. Interacts (via C-terminus) with RAP94 (via N-terminus). Interacts with the cap-specific mRNA (nucleoside-2'-O-)-methyltransferase.

Its subcellular location is the virion. The catalysed reaction is a ribonucleoside 5'-triphosphate + H2O = a ribonucleoside 5'-diphosphate + phosphate + H(+). Its function is as follows. DNA-dependent ATPase required for providing the needed energy to achieve the termination of early transcripts. Acts in concert with the RAP94 subunit of the virion RNA polymerase and the capping enzyme/VTF to catalyze release of UUUUUNU-containing nascent RNA from the elongation complex. NPH-I must bind ssDNA in order to exhibit ATPase activity. In Vertebrata (FPV), this protein is Nucleoside triphosphatase I (NPH1).